A 177-amino-acid polypeptide reads, in one-letter code: ADP-ribosylation factor-like protein 17 (177 aa).

Gly2 carries the N-myristoyl glycine lipid modification. GTP is bound by residues 24-31 (SLDTAGKT), 67-71 (DVGSH), and 125-128 (LPHS).

This sequence belongs to the small GTPase superfamily. Arf family.

The protein resides in the golgi apparatus. Functionally, GTP-binding protein that functions as an allosteric activator of the cholera toxin catalytic subunit, an ADP-ribosyltransferase. Involved in protein trafficking; may modulate vesicle budding and uncoating within the Golgi apparatus. The polypeptide is ADP-ribosylation factor-like protein 17 (ARL17A) (Homo sapiens (Human)).